The primary structure comprises 395 residues: MRNIMYFGGTCQSPALPALVRPPAPPLQPSLDIKPFLPFPLDTAAAVNLFPNFNAMDPIQKAVINHTFGVPLPHRRKQIISCNICQLRFNSDSQAAAHYKGTKHAKKLKALEAMKNKQKSVTAKDSAKTTFTSITTNTINTSSDKTDGTAGTPAISTTTTVEIRKSSVMTTEITSKVEKSPTTATGNSSCPSTETEEEKAKRLLYCSLCKVAVNSASQLEAHNSGTKHKTMLEARNGSGTIKAFPRAGVKGKGPVNKGNTGLQNKTFHCEICDVHVNSETQLKQHISSRRHKDRAAGKPPKPKYSPYNKLQKTAHPLGVKLVFSKEPSKPLAPRILPNPLAAAAAAAAVAVSSPFSLRTAPAATLFQTSALPPALLRPAPGPIRTAHTPVLFAPY.

A Matrin-type 1 zinc finger spans residues 80–110; it reads ISCNICQLRFNSDSQAAAHYKGTKHAKKLKA. Residues 169–193 are compositionally biased toward polar residues; it reads MTTEITSKVEKSPTTATGNSSCPST. The disordered stretch occupies residues 169 to 194; sequence MTTEITSKVEKSPTTATGNSSCPSTE. 2 consecutive Matrin-type zinc fingers follow at residues 204–234 and 267–297; these read LYCSLCKVAVNSASQLEAHNSGTKHKTMLEA and FHCEICDVHVNSETQLKQHISSRRHKDRAAG. The interval 282-309 is disordered; the sequence is LKQHISSRRHKDRAAGKPPKPKYSPYNK.

The protein resides in the nucleus. The protein is Zinc finger protein 385D (ZNF385D) of Homo sapiens (Human).